Here is a 249-residue protein sequence, read N- to C-terminus: Dihydroneopterin 2',3'-cyclic phosphate phosphodiesterase (249 aa).

Residues 58-172 (LIEHTISVTK…VHYADEADSK (115 aa)) enclose the HD domain.

In terms of assembly, homododecamer. Fe(2+) serves as cofactor. It depends on Zn(2+) as a cofactor.

The catalysed reaction is 7,8-dihydroneopterin 2',3'-cyclic phosphate + H2O = 7,8-dihydroneopterin 3'-phosphate + H(+). The enzyme catalyses 7,8-dihydroneopterin 2',3'-cyclic phosphate + H2O = 7,8-dihydroneopterin 2'-phosphate + H(+). It functions in the pathway cofactor biosynthesis; 5,6,7,8-tetrahydromethanopterin biosynthesis. Functionally, cyclic phosphodiesterase that hydrolyzes the cyclic phosphate of 7,8-dihydroneopterin 2',3'-cyclic phosphate (H2N-cP) and converts it to a mixture of 7,8-dihydroneopterin 2'-phosphate (H2N-2'P) and 7,8-dihydroneopterin 3'-phosphate (H2N-3'P). Is also able to utilize other phosphodiesters as substrates in vitro: hydrolysis of bis-pNPP and pNPPC produces nitrophenyl phosphate, and that of 2',3'-cAMP produces 3'-AMP. ATP, 3',5'-cAMP, GTP, 3',5'-cGMP, and 4',5'-cFMN cannot serve as substrates. The chain is Dihydroneopterin 2',3'-cyclic phosphate phosphodiesterase (mptB) from Methanocaldococcus jannaschii (strain ATCC 43067 / DSM 2661 / JAL-1 / JCM 10045 / NBRC 100440) (Methanococcus jannaschii).